The primary structure comprises 264 residues: S-adenosylmethionine decarboxylase proenzyme (264 aa).

Ser-112 (schiff-base intermediate with substrate; via pyruvic acid) is an active-site residue. Residue Ser-112 is modified to Pyruvic acid (Ser); by autocatalysis. His-117 acts as the Proton acceptor; for processing activity in catalysis. Cys-140 acts as the Proton donor; for catalytic activity in catalysis.

It belongs to the prokaryotic AdoMetDC family. Type 2 subfamily. Heterooctamer of four alpha and four beta chains arranged as a tetramer of alpha/beta heterodimers. The cofactor is pyruvate. Post-translationally, is synthesized initially as an inactive proenzyme. Formation of the active enzyme involves a self-maturation process in which the active site pyruvoyl group is generated from an internal serine residue via an autocatalytic post-translational modification. Two non-identical subunits are generated from the proenzyme in this reaction, and the pyruvate is formed at the N-terminus of the alpha chain, which is derived from the carboxyl end of the proenzyme. The post-translation cleavage follows an unusual pathway, termed non-hydrolytic serinolysis, in which the side chain hydroxyl group of the serine supplies its oxygen atom to form the C-terminus of the beta chain, while the remainder of the serine residue undergoes an oxidative deamination to produce ammonia and the pyruvoyl group blocking the N-terminus of the alpha chain.

The catalysed reaction is S-adenosyl-L-methionine + H(+) = S-adenosyl 3-(methylsulfanyl)propylamine + CO2. Its pathway is amine and polyamine biosynthesis; S-adenosylmethioninamine biosynthesis; S-adenosylmethioninamine from S-adenosyl-L-methionine: step 1/1. Functionally, catalyzes the decarboxylation of S-adenosylmethionine to S-adenosylmethioninamine (dcAdoMet), the propylamine donor required for the synthesis of the polyamines spermine and spermidine from the diamine putrescine. This is S-adenosylmethionine decarboxylase proenzyme from Hamiltonella defensa subsp. Acyrthosiphon pisum (strain 5AT).